Here is a 184-residue protein sequence, read N- to C-terminus: MAFLKDLYKNKVAKDLQKEFAYSSVMQIPKIEKVVINAGIGNAVADKKHLEAAISELTLITGQRPVETKAKKSIATFKLRAGQSIGAKVTLRGDRMWAFIETLFNIALPRVRDFKGISNNSFDNQGNYTLGIKEQIIFPQVVYDDVKSVRGFDVTFVTTAKTAQEAKALLVGLGAPFQKVRGDK.

Belongs to the universal ribosomal protein uL5 family. As to quaternary structure, part of the 50S ribosomal subunit; part of the 5S rRNA/L5/L18/L25 subcomplex. Contacts the 5S rRNA and the P site tRNA. Forms a bridge to the 30S subunit in the 70S ribosome.

Its function is as follows. This is one of the proteins that bind and probably mediate the attachment of the 5S RNA into the large ribosomal subunit, where it forms part of the central protuberance. In the 70S ribosome it contacts protein S13 of the 30S subunit (bridge B1b), connecting the 2 subunits; this bridge is implicated in subunit movement. Contacts the P site tRNA; the 5S rRNA and some of its associated proteins might help stabilize positioning of ribosome-bound tRNAs. This Ureaplasma parvum serovar 3 (strain ATCC 27815 / 27 / NCTC 11736) protein is Large ribosomal subunit protein uL5.